The following is a 569-amino-acid chain: Methionine--tRNA ligase (569 aa).

Residues 11–21 (PYINGIKHLGN) carry the 'HIGH' region motif. C143, C146, C156, and C159 together coordinate Zn(2+). The 'KMSKS' region motif lies at 342–346 (KFSTS). T345 is a binding site for ATP.

Belongs to the class-I aminoacyl-tRNA synthetase family. MetG type 1 subfamily. Monomer. Zn(2+) is required as a cofactor.

It is found in the cytoplasm. It carries out the reaction tRNA(Met) + L-methionine + ATP = L-methionyl-tRNA(Met) + AMP + diphosphate. Functionally, is required not only for elongation of protein synthesis but also for the initiation of all mRNA translation through initiator tRNA(fMet) aminoacylation. This chain is Methionine--tRNA ligase, found in Caulobacter vibrioides (strain ATCC 19089 / CIP 103742 / CB 15) (Caulobacter crescentus).